A 1027-amino-acid polypeptide reads, in one-letter code: Contactin-5 (1027 aa).

The first 19 residues, 1 to 19, serve as a signal peptide directing secretion; that stretch reads MMWLSWKLFLFLSLIGCLS. Ig-like C2-type domains are found at residues 32-117, 123-209, 227-307, 317-401, 407-494, and 498-593; these read PDDV…AVLQ, NFSG…RVLS, PKIE…RNVF, PQWV…AELK, PTFP…ASVS, and PTRI…TELL. The cysteines at positions 50 and 100 are disulfide-linked. 2 N-linked (GlcNAc...) asparagine glycosylation sites follow: N65 and N123. Intrachain disulfides connect C144-C196 and C249-C296. N324, N376, and N467 each carry an N-linked (GlcNAc...) asparagine glycan. 3 disulfide bridges follow: C338-C385, C430-C478, and C520-C577. Fibronectin type-III domains lie at 600–698, 703–800, 805–899, and 901–994; these read PPGV…TNEA, PPAN…SAEG, APID…TKKS, and PSQA…SYAG. N706, N743, N858, and N929 each carry an N-linked (GlcNAc...) asparagine glycan. S999 carries the GPI-anchor amidated serine lipid modification. Positions 1000 to 1027 are cleaved as a propeptide — removed in mature form; sequence AQSTLHMFSTSSSSVTLLLVLMVPSTSW.

The protein belongs to the immunoglobulin superfamily. Contactin family. In terms of assembly, interacts with INgCAM/L1 and the tenascin-R TNP protein. Does not interacts with NrCAM. In terms of tissue distribution, expressed by subpopulations of Purkinje cells in the cerebellum. Also expressed by one type of Purkinje cell afferents, the climbing fibers.

The protein resides in the cell membrane. Contactins mediate cell surface interactions during nervous system development. May contribute to the formation of somatotopic maps of cerebellar afferents during the development of the nervous system. The chain is Contactin-5 (CNTN5) from Gallus gallus (Chicken).